The following is a 347-amino-acid chain: Holliday junction branch migration complex subunit RuvB (347 aa).

A large ATPase domain (RuvB-L) region spans residues 4–184; it reads QDRIVDGHAS…FGIVQRLEFY (181 aa). ATP is bound by residues arginine 24, glycine 65, lysine 68, threonine 69, threonine 70, 131–133, arginine 174, tyrosine 184, and arginine 221; that span reads EDF. Threonine 69 serves as a coordination point for Mg(2+). Residues 185 to 255 are small ATPAse domain (RuvB-S); that stretch reads SVQDLTHIVK…IADSALNMLN (71 aa). The tract at residues 258-347 is head domain (RuvB-H); the sequence is HHGFDHMDRR…SQQQDSLPGI (90 aa). Residues arginine 294, arginine 313, and arginine 318 each contribute to the DNA site.

Belongs to the RuvB family. In terms of assembly, homohexamer. Forms an RuvA(8)-RuvB(12)-Holliday junction (HJ) complex. HJ DNA is sandwiched between 2 RuvA tetramers; dsDNA enters through RuvA and exits via RuvB. An RuvB hexamer assembles on each DNA strand where it exits the tetramer. Each RuvB hexamer is contacted by two RuvA subunits (via domain III) on 2 adjacent RuvB subunits; this complex drives branch migration. In the full resolvosome a probable DNA-RuvA(4)-RuvB(12)-RuvC(2) complex forms which resolves the HJ.

Its subcellular location is the cytoplasm. The catalysed reaction is ATP + H2O = ADP + phosphate + H(+). The RuvA-RuvB-RuvC complex processes Holliday junction (HJ) DNA during genetic recombination and DNA repair, while the RuvA-RuvB complex plays an important role in the rescue of blocked DNA replication forks via replication fork reversal (RFR). RuvA specifically binds to HJ cruciform DNA, conferring on it an open structure. The RuvB hexamer acts as an ATP-dependent pump, pulling dsDNA into and through the RuvAB complex. RuvB forms 2 homohexamers on either side of HJ DNA bound by 1 or 2 RuvA tetramers; 4 subunits per hexamer contact DNA at a time. Coordinated motions by a converter formed by DNA-disengaged RuvB subunits stimulates ATP hydrolysis and nucleotide exchange. Immobilization of the converter enables RuvB to convert the ATP-contained energy into a lever motion, pulling 2 nucleotides of DNA out of the RuvA tetramer per ATP hydrolyzed, thus driving DNA branch migration. The RuvB motors rotate together with the DNA substrate, which together with the progressing nucleotide cycle form the mechanistic basis for DNA recombination by continuous HJ branch migration. Branch migration allows RuvC to scan DNA until it finds its consensus sequence, where it cleaves and resolves cruciform DNA. The protein is Holliday junction branch migration complex subunit RuvB of Teredinibacter turnerae (strain ATCC 39867 / T7901).